Reading from the N-terminus, the 234-residue chain is UPF0173 metal-dependent hydrolase R01310 (234 aa).

Belongs to the UPF0173 family.

The polypeptide is UPF0173 metal-dependent hydrolase R01310 (Rhizobium meliloti (strain 1021) (Ensifer meliloti)).